The primary structure comprises 105 residues: Large ribosomal subunit protein eL30 (105 aa).

The protein belongs to the eukaryotic ribosomal protein eL30 family.

This Eremothecium gossypii (strain ATCC 10895 / CBS 109.51 / FGSC 9923 / NRRL Y-1056) (Yeast) protein is Large ribosomal subunit protein eL30 (RPL30).